Reading from the N-terminus, the 288-residue chain is Keratin-associated protein 5-4 (288 aa).

9 tandem repeats follow at residues C49 to P52, C55 to P58, C61 to P64, C201 to P204, C220 to P223, C239 to P242, C249 to P252, C268 to P271, and C278 to P281. Residues C49 to P281 form a 9 X 4 AA repeats of C-C-X-P region.

This sequence belongs to the KRTAP type 5 family. In terms of assembly, interacts with hair keratins. Restricted to hair root, not detected in any other tissues.

In terms of biological role, in the hair cortex, hair keratin intermediate filaments are embedded in an interfilamentous matrix, consisting of hair keratin-associated protein (KRTAP), which are essential for the formation of a rigid and resistant hair shaft through their extensive disulfide bond cross-linking with abundant cysteine residues of hair keratins. The matrix proteins include the high-sulfur and high-glycine-tyrosine keratins. The protein is Keratin-associated protein 5-4 (KRTAP5-4) of Homo sapiens (Human).